Here is a 1293-residue protein sequence, read N- to C-terminus: Receptor-type tyrosine-protein phosphatase C (1293 aa).

An N-terminal signal peptide occupies residues 1 to 25 (MTMGLWLKLLAFGFALLDTEVFVTG). At 26–566 (QTPTPSDELS…RNESTNFNAK (541 aa)) the chain is on the extracellular side. Residues 43-174 (LPQSDPLPAR…STTDISSGAS (132 aa)) are disordered. Polar residues-rich tracts occupy residues 53-72 (TTES…SETT), 88-110 (QPDS…QADN), and 149-169 (LARN…TTDI). A glycan (N-linked (GlcNAc...) asparagine) is linked at asparagine 66. N-linked (GlcNAc...) asparagine glycans are attached at residues asparagine 152, asparagine 163, asparagine 209, asparagine 213, asparagine 220, asparagine 255, asparagine 260, asparagine 292, asparagine 313, asparagine 324, asparagine 349, asparagine 418, asparagine 429, asparagine 459, and asparagine 491. Fibronectin type-III domains are found at residues 376 to 472 (IPET…TKAD) and 473 to 568 (RPDK…AKAL). The chain crosses the membrane as a helical span at residues 567–588 (ALIIFLVFLIIVTSIALLVVLY). Residues 589 to 1293 (KIYDLRKKRS…SASPAPTQSS (705 aa)) lie on the Cytoplasmic side of the membrane. Tyrosine-protein phosphatase domains are found at residues 642–901 (FLAE…LVEY) and 933–1216 (LEAE…IASI). Residue tyrosine 672 is modified to Phosphotyrosine. Substrate is bound by residues aspartate 810, 842 to 848 (CSAGVGR), and glutamine 886. Catalysis depends on cysteine 842, which acts as the Phosphocysteine intermediate. A phosphoserine mark is found at serine 964, serine 983, serine 986, serine 990, serine 993, serine 994, and serine 998. Residues 980–1003 (LEMSKESEPESDESSDDDSDSEET) are disordered. A compositionally biased stretch (acidic residues) spans 988-1001 (PESDESSDDDSDSE). Residue cysteine 1157 is the Phosphocysteine intermediate of the active site. The residue at position 1229 (serine 1229) is a Phosphoserine. The interval 1240–1293 (DGGKQDANCVRPDGPLNKAQEDSRGVGTPEPTNSAEEPEHAANGSASPAPTQSS) is disordered. At threonine 1267 the chain carries Phosphothreonine. Residues 1283-1293 (GSASPAPTQSS) are compositionally biased toward polar residues. The residue at position 1286 (serine 1286) is a Phosphoserine.

Belongs to the protein-tyrosine phosphatase family. Receptor class 1/6 subfamily. In terms of assembly, interacts with SKAP1. Interacts with DPP4; the interaction is enhanced in an interleukin-12-dependent manner in activated lymphocytes. Binds GANAB and PRKCSH. Interacts with CD53; this interaction stabilizes PTPRC on the membrane and is required for optimal phosphatase activity. Interacts with CLEC10A. Post-translationally, heavily N- and O-glycosylated.

The protein resides in the cell membrane. It localises to the membrane raft. It is found in the synapse. The catalysed reaction is O-phospho-L-tyrosyl-[protein] + H2O = L-tyrosyl-[protein] + phosphate. Its function is as follows. Protein tyrosine-protein phosphatase required for T-cell activation through the antigen receptor. Acts as a positive regulator of T-cell coactivation upon binding to DPP4. The first PTPase domain has enzymatic activity, while the second one seems to affect the substrate specificity of the first one. Upon T-cell activation, recruits and dephosphorylates SKAP1 and FYN. Dephosphorylates LYN, and thereby modulates LYN activity. Interacts with CLEC10A at antigen presenting cell-T cell contact; CLEC10A on immature dendritic cells recognizes Tn antigen-carrying PTPRC/CD45 receptor on effector T cells and modulates T cell activation threshold to limit autoreactivity. This chain is Receptor-type tyrosine-protein phosphatase C, found in Mus musculus (Mouse).